Here is an 85-residue protein sequence, read N- to C-terminus: Cell division topological specificity factor (85 aa).

It belongs to the MinE family.

In terms of biological role, prevents the cell division inhibition by proteins MinC and MinD at internal division sites while permitting inhibition at polar sites. This ensures cell division at the proper site by restricting the formation of a division septum at the midpoint of the long axis of the cell. The sequence is that of Cell division topological specificity factor from Stutzerimonas stutzeri (strain A1501) (Pseudomonas stutzeri).